Reading from the N-terminus, the 345-residue chain is MTTTITITRPDDWHLHLRDGAALSAVLPDSARRFGRAIVMPNLRPPVTTTALAYAYRERIMQAMPAGSGFEPLMTLYLTDNTSAEEIDRAKASGIVHGVKLYPAGATTNSDSGVTNIGHCVKALEAMEKHGIPLLVHAEVTDVDVDVFDRERVFIERNMVPLLERFQGLRVVFEHITTKDAANFVAGAPENVAATITAHHLLMNRNAMFNGGIRPHHYCLPVLKREEHRLALVAAATSGNPKFFLGTDSAPHAKSAKEAACGCAGMYTAHAGIELYTEVFDAAGSLDRLEAFASFHGPDFYRLPRNTDKITLEKTAWEVPASLPFAGDELVPLRAGSHISWRLKD.

2 residues coordinate Zn(2+): His-14 and His-16. Substrate contacts are provided by residues 16-18 (HLR) and Asn-42. Residues Lys-100, His-137, and His-175 each coordinate Zn(2+). Lys-100 bears the N6-carboxylysine mark. Residue His-137 coordinates substrate. Substrate is bound at residue Leu-220. A Zn(2+)-binding site is contributed by Asp-248. Asp-248 is a catalytic residue. Substrate contacts are provided by His-252 and Ala-264.

Belongs to the metallo-dependent hydrolases superfamily. DHOase family. Class II DHOase subfamily. As to quaternary structure, homodimer. It depends on Zn(2+) as a cofactor.

It catalyses the reaction (S)-dihydroorotate + H2O = N-carbamoyl-L-aspartate + H(+). Its pathway is pyrimidine metabolism; UMP biosynthesis via de novo pathway; (S)-dihydroorotate from bicarbonate: step 3/3. Catalyzes the reversible cyclization of carbamoyl aspartate to dihydroorotate. This is Dihydroorotase from Methylobacillus flagellatus (strain ATCC 51484 / DSM 6875 / VKM B-1610 / KT).